We begin with the raw amino-acid sequence, 410 residues long: Arginine deiminase (410 aa).

Cys-400 acts as the Amidino-cysteine intermediate in catalysis.

This sequence belongs to the arginine deiminase family.

The protein resides in the cytoplasm. The enzyme catalyses L-arginine + H2O = L-citrulline + NH4(+). It functions in the pathway amino-acid degradation; L-arginine degradation via ADI pathway; carbamoyl phosphate from L-arginine: step 1/2. The protein is Arginine deiminase of Lactococcus lactis subsp. cremoris (strain MG1363).